The primary structure comprises 612 residues: Probable Xaa-Pro aminopeptidase P (612 aa).

Mn(2+) contacts are provided by D409, D420, E518, and E532.

It belongs to the peptidase M24B family. Requires Mn(2+) as cofactor.

It catalyses the reaction Release of any N-terminal amino acid, including proline, that is linked to proline, even from a dipeptide or tripeptide.. Functionally, catalyzes the removal of a penultimate prolyl residue from the N-termini of peptides. This Verticillium alfalfae (strain VaMs.102 / ATCC MYA-4576 / FGSC 10136) (Verticillium wilt of alfalfa) protein is Probable Xaa-Pro aminopeptidase P (AMPP).